The following is a 207-amino-acid chain: Protein GET1 (207 aa).

The Lumenal segment spans residues Met1–Leu4. A helical transmembrane segment spans residues Leu5 to Ser24. Residues Thr25–Arg110 are Cytoplasmic-facing. Positions Met44–Arg97 form a coiled coil. The helical transmembrane segment at Trp111–Phe131 threads the bilayer. At Thr132–Thr155 the chain is on the lumenal side. A helical membrane pass occupies residues Val156–Val172. The Cytoplasmic portion of the chain corresponds to Gly173–Gln207.

This sequence belongs to the WRB/GET1 family. In terms of assembly, interacts with GET3.

The protein resides in the endoplasmic reticulum membrane. In terms of biological role, required for the post-translational delivery of tail-anchored (TA) proteins to the endoplasmic reticulum. Acts as a membrane receptor for soluble GET3, which recognizes and selectively binds the transmembrane domain of TA proteins in the cytosol. The sequence is that of Protein GET1 from Paracoccidioides lutzii (strain ATCC MYA-826 / Pb01) (Paracoccidioides brasiliensis).